A 651-amino-acid polypeptide reads, in one-letter code: ATP-binding cassette sub-family G member 5 (651 aa).

Residues 1–32 form a disordered region; it reads MGDLSSLTPGGSMGLQVNRGSQSSLEGAPATA. At 1-383 the chain is on the cytoplasmic side; the sequence is MGDLSSLTPG…RVTRNLVRNK (383 aa). The region spanning 52-293 is the ABC transporter domain; that stretch reads RPWWDITSCR…FNDCGYPCPE (242 aa). 86 to 93 provides a ligand contact to ATP; the sequence is GSSGSGKT. The helical transmembrane segment at 384–404 threads the bilayer; it reads LAVITRLLQNLIMGLFLLFFV. The 258-residue stretch at 388-645 folds into the ABC transmembrane type-2 domain; sequence TRLLQNLIMG…ILGIVVFKIR (258 aa). Over 405–421 the chain is Extracellular; it reads LRVRSNVLKGAIQDRVG. Residues 422-442 traverse the membrane as a helical segment; that stretch reads LLYQFVGATPYTGMLNAVNLF. Residues 443-467 are Cytoplasmic-facing; sequence PVLRAVSDQESQDGLYQKWQMMLAY. Residues 468–489 traverse the membrane as a helical segment; the sequence is ALHVLPFSVVATMIFSSVCYWT. Over 490–500 the chain is Extracellular; the sequence is LGLHPEVARFG. Residues 501 to 521 traverse the membrane as a helical segment; sequence YFSAALLAPHLIGEFLTLVLL. Over 522-528 the chain is Cytoplasmic; sequence GIVQNPN. The chain crosses the membrane as a helical span at residues 529 to 549; the sequence is IVNSVVALLSIAGVLVGSGFL. Residues 550 to 623 lie on the Extracellular side of the membrane; the sequence is RNIQEMPIPF…PGATSRFTMN (74 aa). N584 and N591 each carry an N-linked (GlcNAc...) asparagine glycan. The chain crosses the membrane as a helical span at residues 624 to 644; it reads FLILYSFIPALVILGIVVFKI. Topologically, residues 645 to 651 are cytoplasmic; it reads RDHLISR.

This sequence belongs to the ABC transporter superfamily. ABCG family. Eye pigment precursor importer (TC 3.A.1.204) subfamily. As to quaternary structure, heterodimer with ABCG8. Mg(2+) is required as a cofactor. Post-translationally, N-glycosylated. In terms of tissue distribution, strongly expressed in the liver, lower levels in the small intestine and colon.

It localises to the cell membrane. The protein localises to the apical cell membrane. It catalyses the reaction cholesterol(in) + ATP + H2O = cholesterol(out) + ADP + phosphate + H(+). The enzyme catalyses sitosterol(in) + ATP + H2O = sitosterol(out) + ADP + phosphate + H(+). Its activity is regulated as follows. The ATPase activity of the heterodimer is stimulated by cholate. Taurocholate, glycocholate, taurochenodeoxycholate, glycochenodeoxycholate and taurodeoxycholate also stimulate ATPase activity, but to a lower degree. Glycodeoxycholate has no significant effect on ATPase activity. ATPase activity is inhibited by vanadate and by berillium fluoride. In terms of biological role, ABCG5 and ABCG8 form an obligate heterodimer that mediates Mg(2+)- and ATP-dependent sterol transport across the cell membrane. Plays an essential role in the selective transport of dietary plant sterols and cholesterol in and out of the enterocytes and in the selective sterol excretion by the liver into bile. Required for normal sterol homeostasis. The heterodimer with ABCG8 has ATPase activity. The polypeptide is ATP-binding cassette sub-family G member 5 (Homo sapiens (Human)).